Here is a 455-residue protein sequence, read N- to C-terminus: Phosphoglycerate kinase, glycosomal (455 aa).

Positions 23, 24, 25, 26, 39, 61, 62, 64, 65, 132, 168, and 169 each coordinate (2R)-3-phosphoglycerate. Glycine 214 and alanine 215 together coordinate ADP. CDP is bound at residue glycine 214. Alanine 215 and lysine 216 together coordinate AMP. Alanine 215 is a binding site for ATP. Alanine 215 serves as a coordination point for Mg(2+). Position 216 (lysine 216) interacts with (2R)-3-phosphoglycerate. Aspartate 219 is a CDP binding site. Mg(2+) is bound at residue aspartate 219. Residues lysine 220 and glycine 238 each coordinate ADP. Lysine 220 is a binding site for AMP. Lysine 220 is an ATP binding site. Glycine 238 provides a ligand contact to CDP. AMP-binding residues include alanine 239 and alanine 311. ATP is bound by residues alanine 239 and alanine 311. ADP-binding residues include alanine 311 and asparagine 335. Positions 336 and 341 each coordinate CDP. The ADP site is built by phenylalanine 341, glutamate 342, aspartate 374, and threonine 375. Residue glutamate 342 coordinates AMP. The ATP site is built by glutamate 342, aspartate 374, and threonine 375. Aspartate 374 provides a ligand contact to Mg(2+). The topogenic signal stretch occupies residues 417–455 (DAKAPAAAAAAGGDCPCGSGCAAVPAAATATVSMVLASP).

The protein belongs to the phosphoglycerate kinase family. As to quaternary structure, monomer. Requires Mg(2+) as cofactor.

Its subcellular location is the glycosome. The enzyme catalyses (2R)-3-phosphoglycerate + ATP = (2R)-3-phospho-glyceroyl phosphate + ADP. Its pathway is carbohydrate degradation; glycolysis; pyruvate from D-glyceraldehyde 3-phosphate: step 2/5. In Crithidia fasciculata, this protein is Phosphoglycerate kinase, glycosomal (PGKC).